We begin with the raw amino-acid sequence, 117 residues long: Small ribosomal subunit protein uS17 (117 aa).

A disordered region spans residues 97–117 (AEGLAAAHAGEPETESAATDA).

This sequence belongs to the universal ribosomal protein uS17 family. As to quaternary structure, part of the 30S ribosomal subunit.

One of the primary rRNA binding proteins, it binds specifically to the 5'-end of 16S ribosomal RNA. The protein is Small ribosomal subunit protein uS17 of Rhodopirellula baltica (strain DSM 10527 / NCIMB 13988 / SH1).